A 251-amino-acid chain; its full sequence is Plant UBX domain-containing protein 1 (251 aa).

At methionine 1 the chain carries N-acetylmethionine. One can recognise a UBX domain in the interval 104-180 (SKLTKAVIRV…GFVPGAIVYF (77 aa)). A disordered region spans residues 212-251 (AVEPVESSSEPATVDSSAVPVEHERKSTEKKTTKPKWFKM). Residues 217-227 (ESSSEPATVDS) show a composition bias toward polar residues. Over residues 232-243 (VEHERKSTEKKT) the composition is skewed to basic and acidic residues.

Interacts with CDC48A (non-hexameric) via its UBX-containing C-terminal domain.

It is found in the cytoplasm. Functionally, regulates CDC48A by inhibiting its ATPase activity and by promoting the disassembly of the active hexamer. The protein is Plant UBX domain-containing protein 1 of Arabidopsis thaliana (Mouse-ear cress).